The chain runs to 432 residues: 3-phosphoshikimate 1-carboxyvinyltransferase (432 aa).

Residues K25, S26, and R30 each contribute to the 3-phosphoshikimate site. K25 contributes to the phosphoenolpyruvate binding site. Positions 97 and 125 each coordinate phosphoenolpyruvate. S170, Q172, D318, and K345 together coordinate 3-phosphoshikimate. Q172 contacts phosphoenolpyruvate. D318 (proton acceptor) is an active-site residue. Positions 349 and 393 each coordinate phosphoenolpyruvate.

This sequence belongs to the EPSP synthase family. As to quaternary structure, monomer.

The protein localises to the cytoplasm. It carries out the reaction 3-phosphoshikimate + phosphoenolpyruvate = 5-O-(1-carboxyvinyl)-3-phosphoshikimate + phosphate. Its pathway is metabolic intermediate biosynthesis; chorismate biosynthesis; chorismate from D-erythrose 4-phosphate and phosphoenolpyruvate: step 6/7. Its function is as follows. Catalyzes the transfer of the enolpyruvyl moiety of phosphoenolpyruvate (PEP) to the 5-hydroxyl of shikimate-3-phosphate (S3P) to produce enolpyruvyl shikimate-3-phosphate and inorganic phosphate. This Geobacillus thermodenitrificans (strain NG80-2) protein is 3-phosphoshikimate 1-carboxyvinyltransferase.